Reading from the N-terminus, the 392-residue chain is Succinate--CoA ligase [ADP-forming] subunit beta (392 aa).

The ATP-grasp domain occupies 9–248; that stretch reads KDILRKFGVA…TNEEDPFEVE (240 aa). ATP contacts are provided by residues lysine 50, 57–59, glutamate 103, methionine 106, and glutamate 111; that span reads GRG. The Mg(2+) site is built by asparagine 203 and aspartate 217. Substrate-binding positions include asparagine 268 and 325-327; that span reads GIV.

This sequence belongs to the succinate/malate CoA ligase beta subunit family. Heterotetramer of two alpha and two beta subunits. The cofactor is Mg(2+).

The catalysed reaction is succinate + ATP + CoA = succinyl-CoA + ADP + phosphate. It carries out the reaction GTP + succinate + CoA = succinyl-CoA + GDP + phosphate. It functions in the pathway carbohydrate metabolism; tricarboxylic acid cycle; succinate from succinyl-CoA (ligase route): step 1/1. Succinyl-CoA synthetase functions in the citric acid cycle (TCA), coupling the hydrolysis of succinyl-CoA to the synthesis of either ATP or GTP and thus represents the only step of substrate-level phosphorylation in the TCA. The beta subunit provides nucleotide specificity of the enzyme and binds the substrate succinate, while the binding sites for coenzyme A and phosphate are found in the alpha subunit. The chain is Succinate--CoA ligase [ADP-forming] subunit beta from Pelodictyon phaeoclathratiforme (strain DSM 5477 / BU-1).